A 687-amino-acid chain; its full sequence is CWF19-like protein 2 homolog (687 aa).

Residues 6–51 are a coiled coil; it reads FESGREKDKARQELREAREAMLQQAKERAELRGQRERQKELRGEAD. Residues 24–50 are compositionally biased toward basic and acidic residues; the sequence is EAMLQQAKERAELRGQRERQKELRGEA. The disordered stretch occupies residues 24-281; the sequence is EAMLQQAKER…PKSRPSCLTD (258 aa). Residues 66 to 92 show a composition bias toward basic residues; sequence KKSKKNVSKHKSRSKSKSSKKSRKHRN. Over residues 93 to 107 the composition is skewed to low complexity; it reads SSSSSESSTSSSSSF. Residues 108-131 adopt a coiled-coil conformation; that stretch reads SEDEKERKRRKKKSKRSRKESASE. Over residues 114–125 the composition is skewed to basic residues; sequence RKRRKKKSKRSR. Phosphoserine occurs at positions 128 and 130. 2 stretches are compositionally biased toward basic and acidic residues: residues 146–157 and 168–180; these read VTKKEPPQRDDW and FSRERKEPAKPNE. Positions 290 to 325 form a coiled coil; it reads KAIKAELKGKKELAAELNQQLEAARKERAEFIASGE. Positions 355 to 383 are disordered; that stretch reads VRPLVQSGDPNESYGGRMGPKRGSKKVDT. Positions 444-475 form a coiled coil; sequence KQISASDAEKREMQSAIREHEKLVATLDNCER.

The protein belongs to the CWF19 family.

The chain is CWF19-like protein 2 homolog from Drosophila melanogaster (Fruit fly).